The sequence spans 563 residues: Arginine--tRNA ligase (563 aa).

The 'HIGH' region signature appears at 121-131 (PNIAKPFSIGH).

The protein belongs to the class-I aminoacyl-tRNA synthetase family. As to quaternary structure, monomer.

The protein resides in the cytoplasm. The catalysed reaction is tRNA(Arg) + L-arginine + ATP = L-arginyl-tRNA(Arg) + AMP + diphosphate. The protein is Arginine--tRNA ligase of Streptococcus pneumoniae (strain ATCC BAA-255 / R6).